We begin with the raw amino-acid sequence, 133 residues long: Nickel-responsive regulator (133 aa).

Ni(2+) contacts are provided by His76, His87, His89, and Cys95.

Belongs to the transcriptional regulatory CopG/NikR family. As to quaternary structure, homotetramer. Ni(2+) is required as a cofactor.

In terms of biological role, transcriptional repressor of the nikABCDE operon. Is active in the presence of excessive concentrations of intracellular nickel. The sequence is that of Nickel-responsive regulator from Shigella dysenteriae serotype 1 (strain Sd197).